We begin with the raw amino-acid sequence, 130 residues long: Glycine cleavage system H protein (130 aa).

The region spanning 22 to 103 is the Lipoyl-binding domain; sequence QAWIGISDYA…PYANYIVVVA (82 aa). Lys-63 is modified (N6-lipoyllysine).

The protein belongs to the GcvH family. In terms of assembly, the glycine cleavage system is composed of four proteins: P, T, L and H. (R)-lipoate serves as cofactor.

Functionally, the glycine cleavage system catalyzes the degradation of glycine. The H protein shuttles the methylamine group of glycine from the P protein to the T protein. This is Glycine cleavage system H protein from Syntrophomonas wolfei subsp. wolfei (strain DSM 2245B / Goettingen).